A 418-amino-acid chain; its full sequence is 1-acylglycerol-3-phosphate O-acyltransferase (418 aa).

One can recognise an AB hydrolase-1 domain in the interval 121–251 (PTLVMVHGYG…RATWKGAVLN (131 aa)). Positions 197 to 201 (GHSFG) match the GXSXG motif. The HXXXXD motif motif lies at 379-384 (HFVFID).

Belongs to the peptidase S33 family. ABHD4/ABHD5 subfamily.

The protein localises to the cytoplasm. It carries out the reaction a 1-acyl-sn-glycero-3-phosphate + an acyl-CoA = a 1,2-diacyl-sn-glycero-3-phosphate + CoA. In terms of biological role, lysophosphatidic acid acyltransferase which functions in phosphatidic acid biosynthesis. Is highly specific for lysophosphatidic acid and able to use different acyl-CoA donors. May regulate neutral lipid accumulation and participate in the regulation of lipid turnover in vegetative cells. Possesses additional triacylglycerol lipase and phospholipase A2 activities in vitro. Is not active as esterase or lysophospholipase. The polypeptide is 1-acylglycerol-3-phosphate O-acyltransferase (Arabidopsis thaliana (Mouse-ear cress)).